A 118-amino-acid polypeptide reads, in one-letter code: UPF0295 protein BCE_0593 (118 aa).

Helical transmembrane passes span 12–32 (IRTFALSLVFIGLFIAYLGVF) and 43–63 (FMMVGFLAVIASTVVYFWIGM).

Belongs to the UPF0295 family.

The protein localises to the cell membrane. The chain is UPF0295 protein BCE_0593 from Bacillus cereus (strain ATCC 10987 / NRS 248).